The primary structure comprises 466 residues: Cysteine--tRNA ligase (466 aa).

Cys-27 lines the Zn(2+) pocket. Positions 29-39 (PTVYNFFHIGN) match the 'HIGH' region motif. Residues Cys-207, His-232, and Glu-236 each contribute to the Zn(2+) site. Positions 264–268 (KMSKS) match the 'KMSKS' region motif. Lys-267 provides a ligand contact to ATP.

This sequence belongs to the class-I aminoacyl-tRNA synthetase family. As to quaternary structure, monomer. Zn(2+) is required as a cofactor.

It is found in the cytoplasm. The enzyme catalyses tRNA(Cys) + L-cysteine + ATP = L-cysteinyl-tRNA(Cys) + AMP + diphosphate. The sequence is that of Cysteine--tRNA ligase from Clostridium beijerinckii (strain ATCC 51743 / NCIMB 8052) (Clostridium acetobutylicum).